The primary structure comprises 617 residues: Putative type VI secretion system protein VgrGA (617 aa).

2 disordered regions span residues 325–344 (GQQP…TLSN) and 449–469 (RTFH…TRTS).

The protein belongs to the VgrG protein family.

A Vgr protein that is probably part of a type VI secretion system (T6SS). May be required for export of proteins involved in Rhs-mediated cellular contact-dependent growth inhibition (CDI). This Dickeya dadantii (strain 3937) (Erwinia chrysanthemi (strain 3937)) protein is Putative type VI secretion system protein VgrGA (vgrGA).